Consider the following 314-residue polypeptide: MFKEEDSLRKGQNVAAWKTLLAGAVSGLLARSITAPMDTIKIRLQLTPANGLKPFGSQVMEVARSMIKNEGIRSFWKGNIPGSLLYVTYGSAQFSSYSLFNRYLTPFGLEARLHSLVVGAFAGITSSIVSYPFDVLRTRLVANNQMHSMSITREVRDIWKLEGLPGFFKGSIASMTTITLTASIMFGTYETIRIYCDENEKTTAAHKKWELATLNHSAGTIGGVIAKIITFPLETIRRRMQFMNSKHLEKFSRHSSVYGSYKGYGFARIGLQILKQEGVSSLYRGILVALSKTIPTTFVSFWGYETAIHYLRMY.

Transmembrane regions (helical) follow at residues 14 to 30 (VAAWKTLLAGAVSGLLA), 84 to 100 (LLYVTYGSAQFSSYSLF), 116 to 136 (LVVGAFAGITSSIVSYPFDVL), 170 to 186 (GSIASMTTITLTASIMF), 217 to 233 (SAGTIGGVIAKIITFPL), and 285 to 302 (GILVALSKTIPTTFVSFW). Solcar repeat units follow at residues 14–103 (VAAW…FNRY), 110–195 (EARL…IRIY), and 210–310 (ELAT…AIHY).

This sequence belongs to the mitochondrial carrier (TC 2.A.29) family.

The protein localises to the mitochondrion inner membrane. Mitochondrial transporter that mediates uptake of thiamine pyrophosphate (ThPP) into mitochondria. The chain is Mitochondrial thiamine pyrophosphate carrier 1 (TPC1) from Saccharomyces cerevisiae (strain ATCC 204508 / S288c) (Baker's yeast).